Consider the following 183-residue polypeptide: Translation initiation factor IF-3 (183 aa).

Polar residues predominate over residues 1-13; the sequence is MKQPDRNQQQGAK. Positions 1-24 are disordered; the sequence is MKQPDRNQQQGAKSNRPAINDEIR.

Belongs to the IF-3 family. In terms of assembly, monomer.

The protein localises to the cytoplasm. IF-3 binds to the 30S ribosomal subunit and shifts the equilibrium between 70S ribosomes and their 50S and 30S subunits in favor of the free subunits, thus enhancing the availability of 30S subunits on which protein synthesis initiation begins. This is Translation initiation factor IF-3 from Acinetobacter baylyi (strain ATCC 33305 / BD413 / ADP1).